The following is a 202-amino-acid chain: Phospholipase A2 inhibitor gamma subunit A (202 aa).

Positions 1-19 are cleaved as a signal peptide; it reads MKSLQIICLLFIFVARGSC. Intrachain disulfides connect cysteine 22–cysteine 47, cysteine 25–cysteine 32, cysteine 40–cysteine 68, cysteine 74–cysteine 95, cysteine 96–cysteine 101, cysteine 119–cysteine 144, cysteine 137–cysteine 166, and cysteine 170–cysteine 192. A glycan (N-linked (GlcNAc...) asparagine) is linked at asparagine 177.

This sequence belongs to the CNF-like-inhibitor family. As to quaternary structure, heterodimer of subunit A and subunit B. In terms of processing, N-glycosylated. Expressed by the liver. Not expressed in esophagus, stomach, pancreas, spleen, gall bladder, small intestine, rectum, kidney, trachea, lung, testis and body fat.

Its subcellular location is the secreted. Inhibits the enzymatic activity of all phospholipase A2 (PA2) groups. This chain is Phospholipase A2 inhibitor gamma subunit A, found in Elaphe quadrivirgata (Japanese four-lined ratsnake).